The following is a 261-amino-acid chain: Putative [LysW]-aminoadipate/[LysW]-glutamate kinase (261 aa).

Substrate contacts are provided by residues 35–36, Arg62, and Asn162; that span reads GG.

Belongs to the acetylglutamate kinase family. LysZ subfamily.

The protein localises to the cytoplasm. It carries out the reaction [amino-group carrier protein]-C-terminal-N-(1,4-dicarboxybutan-1-yl)-L-glutamine + ATP = [amino-group carrier protein]-C-terminal-N-(1-carboxy-5-phosphooxy-5-oxopentan-1-yl)-L-glutamine + ADP. The enzyme catalyses [amino-group carrier protein]-C-terminal-gamma-(L-glutamyl)-L-glutamate + ATP = [amino-group carrier protein]-C-terminal-gamma-(5-phospho-L-glutamyl)-L-glutamate + ADP. Its pathway is amino-acid biosynthesis; L-lysine biosynthesis via AAA pathway; L-lysine from L-alpha-aminoadipate (Thermus route): step 2/5. It participates in amino-acid biosynthesis; L-arginine biosynthesis. Functionally, involved in both the arginine and lysine biosynthetic pathways. Phosphorylates the LysW-bound precursors glutamate (for arginine biosynthesis), respectively alpha-aminoadipate (for lysine biosynthesis). The sequence is that of Putative [LysW]-aminoadipate/[LysW]-glutamate kinase from Pyrobaculum aerophilum (strain ATCC 51768 / DSM 7523 / JCM 9630 / CIP 104966 / NBRC 100827 / IM2).